The sequence spans 1009 residues: Helicase-like transcription factor (1009 aa).

An Omega-N-methylarginine modification is found at Arg-27. Residues 38–287 (EFQDVIPPDD…FSEKDRPENV (250 aa)) mediate DNA binding. Residue Lys-112 forms a Glycyl lysine isopeptide (Lys-Gly) (interchain with G-Cter in SUMO2) linkage. Phosphotyrosine; by JAK2 is present on Tyr-195. Lys-211 is covalently cross-linked (Glycyl lysine isopeptide (Lys-Gly) (interchain with G-Cter in SUMO2)). Position 294–301 (294–301 (DDMGLGKT)) interacts with ATP. A disordered region spans residues 336–365 (DDSMKLGGNNTSEKADGLSKDASRCSEQPS). The segment covering 348-359 (EKADGLSKDASR) has biased composition (basic and acidic residues). Ser-397, Ser-398, and Ser-400 each carry phosphoserine. In terms of domain architecture, Helicase ATP-binding spans 435–606 (IEDVAFACAL…WSLLSFLKLK (172 aa)). Residues 557-560 (DEGH) carry the DEGH box motif. Thr-736 carries the phosphothreonine modification. An RING-type zinc finger spans residues 760-801 (CAICLDSLTVPVITHCAHVFCKPCICQVIQNEQPHAKCPLCR). In terms of domain architecture, Helicase C-terminal spans 837-996 (ALMHALTDLR…TKKPNADEMK (160 aa)). The tract at residues 925 to 1009 (SRVFLMDPAW…INEIRTLIDL (85 aa)) is interaction with SP1 and SP3.

Belongs to the SNF2/RAD54 helicase family. RAD16 subfamily. Interacts with SP1 and SP3 independently of DNA; the interaction with these transcriptional factors may be required for basal transcription of target genes. Interacts with EGR1; the interaction requires prior binding to DNA and represses c-Rel via a DNA looping mechanism. Interacts with GATA4. Interacts with PCNA; the interaction promotes polyubiquitination of PCNA through association with the UBE2B-RAD18 and UBE2V2-UBE2N ubiquitin ligase complexes. Interacts with RAD18, SHPRH, UBE2V2 and UBE2N. In terms of tissue distribution, expressed in brain, heart, kidney, liver, lung, pancreas, placenta and skeletal muscle.

The protein localises to the cytoplasm. It is found in the nucleus. Its subcellular location is the nucleolus. It localises to the nucleoplasm. The catalysed reaction is S-ubiquitinyl-[E2 ubiquitin-conjugating enzyme]-L-cysteine + [acceptor protein]-L-lysine = [E2 ubiquitin-conjugating enzyme]-L-cysteine + N(6)-ubiquitinyl-[acceptor protein]-L-lysine.. Its pathway is protein modification; protein ubiquitination. Its function is as follows. Has both helicase and E3 ubiquitin ligase activities. Possesses intrinsic ATP-dependent nucleosome-remodeling activity; This activity may be required for transcriptional activation or repression of specific target promoters. These may include the SERPINE1 and HIV-1 promoters and the SV40 enhancer, to which this protein can bind directly. Plays a role in error-free postreplication repair (PRR) of damaged DNA and maintains genomic stability through acting as a ubiquitin ligase for 'Lys-63'-linked polyubiquitination of chromatin-bound PCNA. The chain is Helicase-like transcription factor (HLTF) from Homo sapiens (Human).